The following is a 237-amino-acid chain: Terpene cyclase spyD (237 aa).

7 consecutive transmembrane segments (helical) span residues 17 to 37 (IYNV…IVTV), 47 to 67 (AIPL…VLVY), 71 to 91 (YLLF…IVYG), 109 to 129 (HLPL…YALA), 138 to 158 (IHGG…CQLL), 167 to 187 (SWTM…GEFL), and 206 to 226 (WCTG…WYMG).

This sequence belongs to the paxB family.

The protein resides in the membrane. It carries out the reaction (S)-(2E,6E,10E)-epoxygeranylgeranyl-triacetate lactone = sartorypyrone F. It catalyses the reaction (S)-(2E,6E,10E)-epoxygeranylgeranyl-triacetate lactone = sartorypyrone D. Its pathway is secondary metabolite biosynthesis; terpenoid biosynthesis. Its function is as follows. Terpene cyclase; part of the gene cluster that mediates the biosynthesis of meroterpenoids called sartorypyrones. Within the pathway, spyD catalyzes the cyclization of epoxygeranylgeranyl-triacetate lactone. SpyD exhibits promiscuous activity, resulting in the formation of bicyclic sartorypyrone F and monocyclic sartorypyrone D. The biosynthesis of sartorypyrones begins with the production of triacetic acid lactone (TAL) by the NR-PKS spyA using one molecule of acetyl-CoA and two molecules of malonyl-CoA. The prenyltransferase spyF then conjugates geranylgeranyl pyrophosphate (GGPP) to TAL to form geranylgeranyl-triacetate lactone, for which the pathway-specific geranylgeranyl pyrophosphate synthase (GGPS) spyE is required to provide GGPP. Subsequently, geranylgeranyl-triacetate lactone is epoxidized at the terminal olein by the FAD-dependent monooxygenase spyC, followed by cyclization of the terpenoid component catalyzed by the terpene cyclase spyD to produce both the bicyclic sartorypyrone F and the monocyclic sartorypyrone D. Finally, the last step of the biosynthesis involves the acetylation of the meroterpenoids sartorypyrones D and F by the acetyltransferase SpyB to produce sartorypyrones A and G, respectively. The protein is Terpene cyclase spyD of Aspergillus fumigatus (strain ATCC MYA-4609 / CBS 101355 / FGSC A1100 / Af293) (Neosartorya fumigata).